The primary structure comprises 418 residues: UDP-N-acetylglucosamine 1-carboxyvinyltransferase (418 aa).

23-24 (KN) contacts phosphoenolpyruvate. Arg-93 contributes to the UDP-N-acetyl-alpha-D-glucosamine binding site. Asp-117 serves as the catalytic Proton donor. UDP-N-acetyl-alpha-D-glucosamine-binding residues include Asp-305 and Val-327.

It belongs to the EPSP synthase family. MurA subfamily.

It is found in the cytoplasm. It catalyses the reaction phosphoenolpyruvate + UDP-N-acetyl-alpha-D-glucosamine = UDP-N-acetyl-3-O-(1-carboxyvinyl)-alpha-D-glucosamine + phosphate. Its pathway is cell wall biogenesis; peptidoglycan biosynthesis. In terms of biological role, cell wall formation. Adds enolpyruvyl to UDP-N-acetylglucosamine. This is UDP-N-acetylglucosamine 1-carboxyvinyltransferase from Mycobacterium leprae (strain TN).